Here is a 2667-residue protein sequence, read N- to C-terminus: eIF-2-alpha kinase activator GCN1 (2667 aa).

HEAT repeat units lie at residues 19 to 56 (DSFY…HELS), 95 to 132 (QWIF…VKFT), 159 to 198 (SFSL…LQHM), 293 to 330 (DLQS…DFNV), 336 to 375 (LLKS…RSKD), 398 to 439 (SQKL…SISI), 466 to 503 (ELPE…PEAN), and 794 to 832 (LLNE…ELFV). The segment at 842–879 (RNDRKVKPKTAEEQRDEESRKRIEEKKKIQSGELEKQE) is disordered. 18 HEAT repeats span residues 929 to 967 (PIIV…LDRS), 985 to 1024 (LSEI…IIKN), 1085 to 1122 (GVET…IYSP), 1199 to 1237 (HMIP…ATAL), 1290 to 1330 (GELL…HMDA), 1333 to 1370 (PKVS…SFKK), 1371 to 1407 (QGDR…VKGL), 1412 to 1450 (LKNY…TIGR), 1454 to 1491 (PYII…QLSG), 1492 to 1529 (HGVK…CAPK), 1533 to 1570 (SCLP…VIRN), 1572 to 1608 (EIQI…HTID), 1610 to 1647 (ASLS…LTEP), 1652 to 1689 (PYLN…GMGE), 1691 to 1728 (NFST…SLDI), 1729 to 1766 (SRFN…SLGD), 1770 to 1807 (PYLP…QFAV), and 1809 to 1845 (GIEV…KLAG). The interval 1853-1875 (SNNSSYNAKDDDDDEPGSSGNDI) is disordered. 10 HEAT repeats span residues 1882 to 1919 (ERLG…NTPK), 1923 to 1960 (EILP…KLSD), 1962 to 1998 (ILPE…SAKT), 2002 to 2039 (PYLS…TFGS), 2040 to 2078 (KASN…VRSS), 2080 to 2110 (VLPV…DAGE), 2114 to 2152 (VHLS…SIDE), 2154 to 2190 (GWDT…GNTM), 2193 to 2230 (EYPE…SLKK), and 2264 to 2301 (KGLA…HTSA). The segment at 2265-2412 (GLASVLPVLI…ISQESKLRAL (148 aa)) is RWDBD region. The stretch at 2326–2348 (QVKSAILQTLSLLISKSPASMKI) is one HEAT 37; degenerate repeat. An HEAT 38; degenerate repeat occupies 2349 to 2385 (FLHQLQPTFIKCLSDSHKNVRTNAASALGLLMTLSSS). 4 HEAT repeats span residues 2387–2421 (DQLV…KKPK), 2425–2462 (ATLD…CFTS), 2508–2545 (PNMP…ASPL), and 2546–2583 (TYAK…SNQQ).

The protein belongs to the GCN1 family. As to quaternary structure, interacts with eif2ak4/gcn2; this interaction stimulates the eif2ak4/gcn2 kinase activity and is impaired by impact upon a variety of stress conditions, such as amino acid depletion, UV-C irradiation, proteasome inhibitor treatment and glucose deprivation. Interacts with impact; this prevents the interaction of gcn1 with eif2ak4/gcn2 and inhibits eif2ak4/gcn2 kinase activity.

It localises to the cytoplasm. Functionally, ribosome collision sensor that activates a translation quality control pathway when a ribosome has stalled during translation. Directly binds to the ribosome and acts as a sentinel for colliding ribosomes. Gcn1 also acts as a positive activator of the integrated stress response (ISR) by mediating activation of eif2ak4/gcn2 in response to amino acid starvation. Interaction with eif2ak4/gcn2 on translating ribosomes stimulates eif2ak4/gcn2 kinase activity, leading to phosphorylation of eukaryotic translation initiation factor 2 (eIF-2-alpha/eif2s1). EIF2S1/eIF-2-alpha phosphorylation converts EIF2S1/eIF-2-alpha into a global protein synthesis inhibitor, leading to a global attenuation of cap-dependent translation, and thus to a reduced overall utilization of amino acids, while concomitantly initiating the preferential translation of ISR-specific mRNAs, such as the transcriptional activator atf4, and hence allowing atf4-mediated reprogramming of amino acid biosynthetic gene expression to alleviate nutrient depletion. In Dictyostelium discoideum (Social amoeba), this protein is eIF-2-alpha kinase activator GCN1.